A 140-amino-acid polypeptide reads, in one-letter code: uncharacterized protein (140 aa).

Residues 62–140 form a disordered region; the sequence is TEARAGRGGP…PQGRWGPSLG (79 aa). The span at 71–94 shows a compositional bias: low complexity; the sequence is PATARSRVSADSQGGRAGSSSPSS.

This is an uncharacterized protein from Homo sapiens (Human).